The sequence spans 260 residues: Transcription factor SUM-1 (260 aa).

In terms of domain architecture, bHLH spans 112–163 (DKRKAATLRERRRLRKVNEAFEALKRHTCANPNQRLPKVEILRNAIEYIEKL). Residues 171 to 208 (KANGDSEMDSAETSSNTSDAMTDGSSPGSYSSDKAQQY) form a disordered region. Residues 181 to 205 (AETSSNTSDAMTDGSSPGSYSSDKA) are compositionally biased toward polar residues.

Efficient DNA binding requires dimerization with another bHLH protein. Homodimer, and heterodimer with the ubiquitous bHLH protein E12.

It localises to the nucleus. In terms of biological role, regulatory factor during embryogenesis. Conversion of pluripotent secondary mesenchyme cells to myogenic cells. It binds to the MCK enhancer element. The chain is Transcription factor SUM-1 (SUM-1) from Lytechinus variegatus (Green sea urchin).